The following is a 765-amino-acid chain: Ubiquitin-like modifier-activating enzyme atg7 (765 aa).

Positions 436-441 (GAGTLG) match the GXGXXG motif motif. Catalysis depends on C616, which acts as the Glycyl thioester intermediate. 2 disordered regions span residues 646-670 (AAPAPKLSSNHQSGQLEFDRDPPNH) and 744-765 (AANDVEWDSDEEGMEDEEPELL). The interval 721-760 (ALTEKDYITELSGLAEVQRKAEAAANDVEWDSDEEGMEDE) is homodimerization. Over residues 748 to 765 (VEWDSDEEGMEDEEPELL) the composition is skewed to acidic residues.

It belongs to the ATG7 family. As to quaternary structure, homodimer. Interacts with ATG8 through a thioester bond between Cys-616 and the C-terminal Gly of ATG8 and with ATG12 through a thioester bond between Cys-616 and the C-terminal Gly of ATG12. Also interacts with ATG3.

It is found in the cytoplasm. The protein localises to the preautophagosomal structure. E1-like activating enzyme involved in the 2 ubiquitin-like systems required for cytoplasm to vacuole transport (Cvt) and autophagy. Activates ATG12 for its conjugation with ATG5 and ATG8 for its conjugation with phosphatidylethanolamine. Both systems are needed for the ATG8 association to Cvt vesicles and autophagosomes membranes. Autophagy is essential for maintenance of amino acid levels and protein synthesis under nitrogen starvation. Required for selective autophagic degradation of the nucleus (nucleophagy) as well as for mitophagy which contributes to regulate mitochondrial quantity and quality by eliminating the mitochondria to a basal level to fulfill cellular energy requirements and preventing excess ROS production. Required for normal mycelial growth and conidiogenesis, and regulates sclerotial formation. Plays an essential role in pathogenesis. This chain is Ubiquitin-like modifier-activating enzyme atg7, found in Botryotinia fuckeliana (strain BcDW1) (Noble rot fungus).